Reading from the N-terminus, the 130-residue chain is Follitropin subunit beta (130 aa).

An N-terminal signal peptide occupies residues 1-20 (MMKSIQLCILLWCLRAVCCH). 6 disulfide bridges follow: Cys-22–Cys-70, Cys-36–Cys-85, Cys-39–Cys-123, Cys-47–Cys-101, Cys-51–Cys-103, and Cys-106–Cys-113. Asn-26 and Asn-43 each carry an N-linked (GlcNAc...) asparagine glycan.

This sequence belongs to the glycoprotein hormones subunit beta family. In terms of assembly, heterodimer. The active follitropin is a heterodimer composed of an alpha chain/CGA shared with other hormones and a unique beta chain/FSHB shown here.

It is found in the secreted. Its function is as follows. Together with the alpha chain CGA constitutes follitropin, the follicle-stimulating hormone, and provides its biological specificity to the hormone heterodimer. Binds FSHR, a G protein-coupled receptor, on target cells to activate downstream signaling pathways. Follitropin is involved in follicle development and spermatogenesis in reproductive organs. The sequence is that of Follitropin subunit beta (Fshb) from Rattus norvegicus (Rat).